The following is a 362-amino-acid chain: Protein RecA (362 aa).

Residue 67 to 74 (GPESSGKT) coordinates ATP. Over residues 337–356 (VADAPADSAPAPVAAVAPKA) the composition is skewed to low complexity. The tract at residues 337 to 362 (VADAPADSAPAPVAAVAPKASARKSA) is disordered.

It belongs to the RecA family.

It is found in the cytoplasm. In terms of biological role, can catalyze the hydrolysis of ATP in the presence of single-stranded DNA, the ATP-dependent uptake of single-stranded DNA by duplex DNA, and the ATP-dependent hybridization of homologous single-stranded DNAs. It interacts with LexA causing its activation and leading to its autocatalytic cleavage. In Clavibacter michiganensis subsp. michiganensis (strain NCPPB 382), this protein is Protein RecA.